Reading from the N-terminus, the 205-residue chain is ATP-dependent Clp protease proteolytic subunit 2 (205 aa).

The active-site Nucleophile is Ser-100. His-125 is a catalytic residue.

Belongs to the peptidase S14 family. As to quaternary structure, fourteen ClpP subunits assemble into 2 heptameric rings which stack back to back to give a disk-like structure with a central cavity, resembling the structure of eukaryotic proteasomes.

The protein resides in the cytoplasm. It carries out the reaction Hydrolysis of proteins to small peptides in the presence of ATP and magnesium. alpha-casein is the usual test substrate. In the absence of ATP, only oligopeptides shorter than five residues are hydrolyzed (such as succinyl-Leu-Tyr-|-NHMec, and Leu-Tyr-Leu-|-Tyr-Trp, in which cleavage of the -Tyr-|-Leu- and -Tyr-|-Trp bonds also occurs).. Cleaves peptides in various proteins in a process that requires ATP hydrolysis. Has a chymotrypsin-like activity. Plays a major role in the degradation of misfolded proteins. In Chlamydia abortus (strain DSM 27085 / S26/3) (Chlamydophila abortus), this protein is ATP-dependent Clp protease proteolytic subunit 2.